The chain runs to 472 residues: Phosphoenolpyruvate carboxykinase (ATP), glycosomal (472 aa).

221-228 contributes to the ATP binding site; the sequence is GLSGTGKT.

This sequence belongs to the phosphoenolpyruvate carboxykinase (ATP) family. In terms of assembly, homodimer.

The protein resides in the glycosome. The enzyme catalyses oxaloacetate + ATP = phosphoenolpyruvate + ADP + CO2. Its pathway is carbohydrate biosynthesis; gluconeogenesis. Its function is as follows. P60 has the capability to bind to microtubules and membrane vesicles in vitro. This is Phosphoenolpyruvate carboxykinase (ATP), glycosomal from Trypanosoma brucei brucei.